Consider the following 118-residue polypeptide: Large ribosomal subunit protein uL18 (118 aa).

The protein belongs to the universal ribosomal protein uL18 family. As to quaternary structure, part of the 50S ribosomal subunit; part of the 5S rRNA/L5/L18/L25 subcomplex. Contacts the 5S and 23S rRNAs.

In terms of biological role, this is one of the proteins that bind and probably mediate the attachment of the 5S RNA into the large ribosomal subunit, where it forms part of the central protuberance. The chain is Large ribosomal subunit protein uL18 from Rickettsia canadensis (strain McKiel).